The primary structure comprises 330 residues: Ferredoxin--NADP reductase (330 aa).

Positions 35, 43, 48, 90, 123, 285, and 326 each coordinate FAD.

It belongs to the ferredoxin--NADP reductase type 2 family. Homodimer. The cofactor is FAD.

The catalysed reaction is 2 reduced [2Fe-2S]-[ferredoxin] + NADP(+) + H(+) = 2 oxidized [2Fe-2S]-[ferredoxin] + NADPH. This is Ferredoxin--NADP reductase from Streptococcus pyogenes serotype M1.